A 461-amino-acid chain; its full sequence is 26S proteasome regulatory subunit 8 (461 aa).

185–192 (GPPGTGKT) contacts ATP.

This sequence belongs to the AAA ATPase family.

Its subcellular location is the cytoplasm. It is found in the nucleus. Its function is as follows. The 26S proteasome is involved in the ATP-dependent degradation of ubiquitinated proteins. The regulatory (or ATPase) complex confers ATP dependency and substrate specificity to the 26S complex. The sequence is that of 26S proteasome regulatory subunit 8 (psmc5) from Xenopus laevis (African clawed frog).